The following is a 317-amino-acid chain: Malate dehydrogenase (317 aa).

NAD(+) is bound by residues 7–13 and Asp34; that span reads GAAGGIG. Residues Arg81 and Arg87 each coordinate substrate. Residues Asn94 and 117-119 each bind NAD(+); that span reads VTN. Positions 119 and 153 each coordinate substrate. Residue His177 is the Proton acceptor of the active site. Met231 contacts NAD(+).

It belongs to the LDH/MDH superfamily. MDH type 1 family. Homodimer.

It carries out the reaction (S)-malate + NAD(+) = oxaloacetate + NADH + H(+). Its function is as follows. Catalyzes the reversible oxidation of malate to oxaloacetate. The protein is Malate dehydrogenase of Actinobacillus pleuropneumoniae serotype 5b (strain L20).